The primary structure comprises 607 residues: MRASGQGPQRRRRGWATRDDSAVTFRDPQPRQPAGGARALRGPDPRGPARAHQAGPLLAGARRSQHMVGGAPPRPAETGCSRSRMTQKNSKLCARANVYTQVPDGGWGWAVAVSFFFVEVFTYGIIKSFGVFFNDLMDSFDESNSKISWIISICVFVLTFTAPLSTVLSNRFGHRLVVMAGGLLISLGMITASFSQRVYHMYISIGVISGLGYCFSFLPTVTILSQYFDKRRSVVTAVASTGECFAVFAFAPAITALKEHIGWRYSLLFVGLLQLNIMVCGALLRPIIIQGPGQSPKAVTLEPRREVQYMLENEKTRTSIDSIDSGVELTTSPKNVPSEAKMEQETRAEQQQTLVTAPKHSQMKAPLLDFSVLKEKSFICYALFGLFATLGFFAPSLYIIPLGISLGIDPDRAAFLLSTMAIAEVFGRIGAGFVLNREPIRKIYIELICVILLTASLFAFTFATEFWGLMLCSVFFGSMVGTIGGTHIPMLAEDDVVGIEKMSSAAGVYVFIQSISGLAGPPLAGLLVDQSKIYSRAFYSCAAGMCLAAVCLALVRPCKKGLCQNSHSGENQTDRQRGKALQDIPEDFLEMDLGKCEHRAHMKMDPV.

The segment at 1 to 84 (MRASGQGPQR…PAETGCSRSR (84 aa)) is disordered. At 1-105 (MRASGQGPQR…ANVYTQVPDG (105 aa)) the chain is on the cytoplasmic side. Residues 106–126 (GWGWAVAVSFFFVEVFTYGII) form a helical membrane-spanning segment. Residues 127–146 (KSFGVFFNDLMDSFDESNSK) lie on the Extracellular side of the membrane. A helical membrane pass occupies residues 147 to 167 (ISWIISICVFVLTFTAPLSTV). Topologically, residues 168-175 (LSNRFGHR) are cytoplasmic. Residues 176–196 (LVVMAGGLLISLGMITASFSQ) traverse the membrane as a helical segment. Topologically, residues 197-202 (RVYHMY) are extracellular. The helical transmembrane segment at 203-223 (ISIGVISGLGYCFSFLPTVTI) threads the bilayer. Residues 224–233 (LSQYFDKRRS) lie on the Cytoplasmic side of the membrane. A helical membrane pass occupies residues 234–254 (VVTAVASTGECFAVFAFAPAI). Residues 255–268 (TALKEHIGWRYSLL) lie on the Extracellular side of the membrane. Residues 269–289 (FVGLLQLNIMVCGALLRPIII) form a helical membrane-spanning segment. The Cytoplasmic portion of the chain corresponds to 290–383 (QGPGQSPKAV…KEKSFICYAL (94 aa)). Phosphoserine is present on residues Ser319, Ser322, Ser325, and Ser332. A helical transmembrane segment spans residues 384–404 (FGLFATLGFFAPSLYIIPLGI). At 405-414 (SLGIDPDRAA) the chain is on the extracellular side. A helical membrane pass occupies residues 415-435 (FLLSTMAIAEVFGRIGAGFVL). The Cytoplasmic segment spans residues 436-442 (NREPIRK). Residues 443 to 463 (IYIELICVILLTASLFAFTFA) traverse the membrane as a helical segment. Over 464 to 465 (TE) the chain is Extracellular. The chain crosses the membrane as a helical span at residues 466–486 (FWGLMLCSVFFGSMVGTIGGT). Topologically, residues 487–507 (HIPMLAEDDVVGIEKMSSAAG) are cytoplasmic. The chain crosses the membrane as a helical span at residues 508–528 (VYVFIQSISGLAGPPLAGLLV). The Extracellular portion of the chain corresponds to 529–536 (DQSKIYSR). The helical transmembrane segment at 537–557 (AFYSCAAGMCLAAVCLALVRP) threads the bilayer. The Cytoplasmic portion of the chain corresponds to 558-607 (CKKGLCQNSHSGENQTDRQRGKALQDIPEDFLEMDLGKCEHRAHMKMDPV).

Belongs to the major facilitator superfamily. Monocarboxylate porter (TC 2.A.1.13) family. In terms of assembly, forms functional complexes with BSG/CD147 or EMB/GP70 ancillary proteins.

The protein resides in the basolateral cell membrane. It carries out the reaction taurine(out) = taurine(in). In terms of biological role, monocarboxylate transporter selective for taurine. May associate with BSG/CD147 or EMB/GP70 ancillary proteins to mediate facilitative efflux or influx of taurine across the plasma membrane. The transport is pH- and sodium-independent. Rather low-affinity, is likely effective for taurine transport in tissues where taurine is present at high concentrations. This is Monocarboxylate transporter 7 from Mus musculus (Mouse).